The chain runs to 149 residues: Large ribosomal subunit protein uL13 (149 aa).

The protein belongs to the universal ribosomal protein uL13 family. Part of the 50S ribosomal subunit.

Its function is as follows. This protein is one of the early assembly proteins of the 50S ribosomal subunit, although it is not seen to bind rRNA by itself. It is important during the early stages of 50S assembly. This Thermotoga maritima (strain ATCC 43589 / DSM 3109 / JCM 10099 / NBRC 100826 / MSB8) protein is Large ribosomal subunit protein uL13.